The following is a 691-amino-acid chain: Elongation factor G (691 aa).

A tr-type G domain is found at 8 to 282 (EKTRNIGIMA…AVVDYLPSPV (275 aa)). GTP-binding positions include 17–24 (AHIDAGKT), 81–85 (DTPGH), and 135–138 (NKMD).

This sequence belongs to the TRAFAC class translation factor GTPase superfamily. Classic translation factor GTPase family. EF-G/EF-2 subfamily.

It localises to the cytoplasm. Catalyzes the GTP-dependent ribosomal translocation step during translation elongation. During this step, the ribosome changes from the pre-translocational (PRE) to the post-translocational (POST) state as the newly formed A-site-bound peptidyl-tRNA and P-site-bound deacylated tRNA move to the P and E sites, respectively. Catalyzes the coordinated movement of the two tRNA molecules, the mRNA and conformational changes in the ribosome. The protein is Elongation factor G of Caldicellulosiruptor saccharolyticus (strain ATCC 43494 / DSM 8903 / Tp8T 6331).